We begin with the raw amino-acid sequence, 189 residues long: MALLSRPALTLLLLLMAAVVRCQEQAQTTDWRATLKTIRNGVHKIDTYLNAALDLLGGEDGLCQYKCSDGSKPFPRYGYKPSPPNGCGSPLFGVHLNIGIPSLTKCCNQHDRCYETCGKSKNDCDEEFQYCLSKICRDVQKTLGLTQHVQACETTVELLFDSVIHLGCKPYLDSQRAACRCHYEEKTDL.

A signal peptide spans 1–22 (MALLSRPALTLLLLLMAAVVRC). Gly-88, Pro-90, and Phe-92 together coordinate Ca(2+). The active site involves His-110. Residue Asp-111 participates in Ca(2+) binding. Residue Asp-125 is part of the active site.

Ca(2+) is required as a cofactor. As to expression, abundantly expressed in heart, skeletal muscle, kidney, liver and pancreas.

Its subcellular location is the secreted. It is found in the cytoplasm. It carries out the reaction a 1,2-diacyl-sn-glycero-3-phosphocholine + H2O = a 1-acyl-sn-glycero-3-phosphocholine + a fatty acid + H(+). PA2 catalyzes the calcium-dependent hydrolysis of the 2-acyl groups in 3-sn-phosphoglycerides. Does not exhibit detectable activity toward sn-2-arachidonoyl- or linoleoyl-phosphatidylcholine or -phosphatidylethanolamine. This is Group XIIA secretory phospholipase A2 (PLA2G12A) from Homo sapiens (Human).